Here is a 128-residue protein sequence, read N- to C-terminus: Fumarate reductase subunit C (128 aa).

Transmembrane regions (helical) follow at residues 31–51 (ATCI…ISLG), 67–87 (VVIL…TLYV), and 106–126 (ILKN…LVLV).

It belongs to the FrdC family. As to quaternary structure, part of an enzyme complex containing four subunits: a flavoprotein (FrdA), an iron-sulfur protein (FrdB), and two hydrophobic anchor proteins (FrdC and FrdD).

Its subcellular location is the cell inner membrane. In terms of biological role, anchors the catalytic components of the fumarate reductase complex to the cell membrane, binds quinones. In Haemophilus ducreyi (strain 35000HP / ATCC 700724), this protein is Fumarate reductase subunit C.